Here is a 564-residue protein sequence, read N- to C-terminus: Dihydroxy-acid dehydratase (564 aa).

Cys-53 contributes to the [2Fe-2S] cluster binding site. Asp-85 is a binding site for Mg(2+). Cys-126 is a [2Fe-2S] cluster binding site. Mg(2+)-binding residues include Asp-127 and Lys-128. Lys-128 bears the N6-carboxylysine mark. Cys-203 is a binding site for [2Fe-2S] cluster. Glu-454 contacts Mg(2+). Ser-480 acts as the Proton acceptor in catalysis.

This sequence belongs to the IlvD/Edd family. In terms of assembly, homodimer. [2Fe-2S] cluster serves as cofactor. Mg(2+) is required as a cofactor.

It catalyses the reaction (2R)-2,3-dihydroxy-3-methylbutanoate = 3-methyl-2-oxobutanoate + H2O. It carries out the reaction (2R,3R)-2,3-dihydroxy-3-methylpentanoate = (S)-3-methyl-2-oxopentanoate + H2O. Its pathway is amino-acid biosynthesis; L-isoleucine biosynthesis; L-isoleucine from 2-oxobutanoate: step 3/4. It functions in the pathway amino-acid biosynthesis; L-valine biosynthesis; L-valine from pyruvate: step 3/4. Functions in the biosynthesis of branched-chain amino acids. Catalyzes the dehydration of (2R,3R)-2,3-dihydroxy-3-methylpentanoate (2,3-dihydroxy-3-methylvalerate) into 2-oxo-3-methylpentanoate (2-oxo-3-methylvalerate) and of (2R)-2,3-dihydroxy-3-methylbutanoate (2,3-dihydroxyisovalerate) into 2-oxo-3-methylbutanoate (2-oxoisovalerate), the penultimate precursor to L-isoleucine and L-valine, respectively. The protein is Dihydroxy-acid dehydratase of Leifsonia xyli subsp. xyli (strain CTCB07).